The chain runs to 385 residues: S-adenosylmethionine synthase (385 aa).

An ATP-binding site is contributed by H16. Residue D18 participates in Mg(2+) binding. E44 contributes to the K(+) binding site. Residues E57 and Q100 each contribute to the L-methionine site. A flexible loop region spans residues 100 to 110; that stretch reads QSPDINQGVDR. Residues 164–166, 230–231, D239, 245–246, A262, and K266 contribute to the ATP site; these read DGK, KF, and RK. Position 239 (D239) interacts with L-methionine. Residue K270 coordinates L-methionine.

Belongs to the AdoMet synthase family. As to quaternary structure, homotetramer; dimer of dimers. It depends on Mg(2+) as a cofactor. The cofactor is K(+).

It is found in the cytoplasm. The catalysed reaction is L-methionine + ATP + H2O = S-adenosyl-L-methionine + phosphate + diphosphate. It functions in the pathway amino-acid biosynthesis; S-adenosyl-L-methionine biosynthesis; S-adenosyl-L-methionine from L-methionine: step 1/1. In terms of biological role, catalyzes the formation of S-adenosylmethionine (AdoMet) from methionine and ATP. The overall synthetic reaction is composed of two sequential steps, AdoMet formation and the subsequent tripolyphosphate hydrolysis which occurs prior to release of AdoMet from the enzyme. This Helicobacter pylori (strain HPAG1) protein is S-adenosylmethionine synthase.